The sequence spans 522 residues: Na(+)/H(+) antiporter NhaB (522 aa).

9 helical membrane-spanning segments follow: residues 13–33 (FLGN…IINP), 98–118 (LLLV…LFVF), 140–160 (AFLS…SVSV), 239–259 (FFIR…LVCL), 304–324 (AIIG…LVGL), 356–376 (LTVF…TPII), 390–410 (LFYL…VGTV), 446–466 (ATPN…APLI), and 477–497 (ALPY…FLLV).

This sequence belongs to the NhaB Na(+)/H(+) (TC 2.A.34) antiporter family.

The protein localises to the cell inner membrane. It carries out the reaction 2 Na(+)(in) + 3 H(+)(out) = 2 Na(+)(out) + 3 H(+)(in). Its function is as follows. Na(+)/H(+) antiporter that extrudes sodium in exchange for external protons. The sequence is that of Na(+)/H(+) antiporter NhaB from Yersinia pestis bv. Antiqua (strain Angola).